Reading from the N-terminus, the 235-residue chain is Urease accessory protein UreF (235 aa).

It belongs to the UreF family. As to quaternary structure, ureD, UreF and UreG form a complex that acts as a GTP-hydrolysis-dependent molecular chaperone, activating the urease apoprotein by helping to assemble the nickel containing metallocenter of UreC. The UreE protein probably delivers the nickel.

The protein localises to the cytoplasm. Required for maturation of urease via the functional incorporation of the urease nickel metallocenter. The protein is Urease accessory protein UreF of Haemophilus influenzae (strain PittEE).